The sequence spans 613 residues: Phosphoinositide phospholipase C 6 (613 aa).

Positions 137–281 (QDMTAPLSHY…LLHRIIISTK (145 aa)) constitute a PI-PLC X-box domain. Residues His152 and His198 contribute to the active site. The interval 288–349 (ESRNPIVKQK…ASEDQKPAYK (62 aa)) is disordered. The PI-PLC Y-box domain maps to 349–465 (KRLITIHAGK…GYVKKPNFLM (117 aa)). Residues 466 to 595 (KKGFHDEVFD…PGIRSVPLYD (130 aa)) enclose the C2 domain.

Ca(2+) serves as cofactor. As to expression, expressed in leaves, flowers and siliques, but not in roots.

The protein resides in the cell membrane. The catalysed reaction is a 1,2-diacyl-sn-glycero-3-phospho-(1D-myo-inositol-4,5-bisphosphate) + H2O = 1D-myo-inositol 1,4,5-trisphosphate + a 1,2-diacyl-sn-glycerol + H(+). Its function is as follows. The production of the second messenger molecules diacylglycerol (DAG) and inositol 1,4,5-trisphosphate (IP3) is mediated by activated phosphatidylinositol-specific phospholipase C enzymes. The protein is Phosphoinositide phospholipase C 6 (PLC6) of Arabidopsis thaliana (Mouse-ear cress).